We begin with the raw amino-acid sequence, 201 residues long: Protein ripply1 (201 aa).

Residues 1 to 29 form a disordered region; that stretch reads MDPAASPAAAPPAAPAAAPAADPAADPAA. Residues 15 to 29 are compositionally biased toward low complexity; the sequence is PAAAPAADPAADPAA. The short motif at 57–60 is the WRPW motif element; that stretch reads AYLW. Residues 99–134 form a ripply homology domain region; it reads HPVRLYWPKSHSFDYLYSAGEILLNNFPVQATINLY. The segment covering 136 to 174 has biased composition (acidic residues); the sequence is DSDSADNEEDKEEEEEEEEEEDDEEEEEDEDKDVNENEP. The disordered stretch occupies residues 136–201; that stretch reads DSDSADNEED…SPDPHSACPN (66 aa).

This sequence belongs to the ripply family. Expressed in the anterior presomitic mesoderm and somites of stage E9.5 dpc embryos. Also expressed in tongue, diaphragm and intercostal muscles at 16.5 dpc.

It localises to the nucleus. Its function is as follows. Plays a role in somitogenesis. Essential for transcriptional repression of the segmental patterning genes, thus terminating the segmentation program in the presomitic mesoderm, and also required for the maintenance of rostrocaudal polarity in somites. In Mus musculus (Mouse), this protein is Protein ripply1.